We begin with the raw amino-acid sequence, 314 residues long: Ferrochelatase (314 aa).

2 residues coordinate Fe cation: His184 and Glu259.

The protein belongs to the ferrochelatase family.

It localises to the cytoplasm. The enzyme catalyses heme b + 2 H(+) = protoporphyrin IX + Fe(2+). It participates in porphyrin-containing compound metabolism; protoheme biosynthesis; protoheme from protoporphyrin-IX: step 1/1. Functionally, catalyzes the ferrous insertion into protoporphyrin IX. The sequence is that of Ferrochelatase from Chlamydia trachomatis serovar A (strain ATCC VR-571B / DSM 19440 / HAR-13).